Consider the following 213-residue polypeptide: BAG family molecular chaperone regulator 6, mitochondrial (213 aa).

The IQ domain occupies 53 to 82; it reads DDAAAARIQAAFRGHLVRRHAAAVRGADDE. A BAG domain is found at 75-152; that stretch reads AVRGADDEAT…GLQEVFDAVL (78 aa).

In terms of assembly, interacts with CAM1-1 under normal conditions. Dissociation of the interaction when calcium-CAM1-1 binding increases under saline-alkaline stress.

It localises to the mitochondrion. Its function is as follows. Co-chaperone that regulates stress responses. Acts as a negative regulator of saline-alkaline stress tolerance. May participate in stress response through regulating the homeostasis of iron, manganese and zinc ions. The polypeptide is BAG family molecular chaperone regulator 6, mitochondrial (Oryza sativa subsp. japonica (Rice)).